A 92-amino-acid polypeptide reads, in one-letter code: Small ribosomal subunit protein uS19c (92 aa).

It belongs to the universal ribosomal protein uS19 family.

The protein localises to the plastid. Its subcellular location is the cyanelle. Functionally, protein S19 forms a complex with S13 that binds strongly to the 16S ribosomal RNA. The protein is Small ribosomal subunit protein uS19c (rps19) of Cyanophora paradoxa.